A 1941-amino-acid polypeptide reads, in one-letter code: Myosin light chain kinase, smooth muscle (1941 aa).

Ig-like C2-type domains are found at residues 33 to 122 and 156 to 244; these read PAFI…VELT and PKFA…AELS. Cysteines 177 and 228 form a disulfide. Tyr226 carries the phosphotyrosine; by ABL1 modification. Residues 255 to 329 are disordered; that stretch reads AVRGTKAPSP…RKVPQSSILQ (75 aa). The segment covering 286-305 has biased composition (polar residues); sequence NCPSPQRSGSSARATNSHLK. Phosphoserine is present on Ser295. Residues 306 to 320 show a composition bias toward basic and acidic residues; the sequence is SPQEPKPKLCEDAPR. Phosphoserine is present on residues Ser333 and Ser355. 4 Ig-like C2-type domains span residues 402–485, 502–587, 611–699, and 709–809; these read PRFE…GQVS, PSFS…ATVT, PIFL…AVLT, and PWFI…APPR. 2 disulfides stabilise this stretch: Cys423-Cys475 and Cys523-Cys571. The residue at position 452 (Tyr452) is a Phosphotyrosine; by ABL1 and SRC. Cys730 and Cys793 are oxidised to a cystine. The residue at position 780 (Tyr780) is a Phosphotyrosine; by ABL1. Repeat copies occupy residues 856 to 883, 884 to 911, 912 to 939, and 940 to 966. The interval 856–985 is 5 X 28 AA approximate tandem repeats; the sequence is DVRGLLKRRV…KKSPSENGGN (130 aa). Positions 911 to 951 are actin-binding (calcium/calmodulin-sensitive); it reads MDFRANLQRQVKPKTISEEERKVHSPQQVDFRSVLAKKGTP. Residues 920–1120 are disordered; it reads QVKPKTISEE…KRPESQGSAP (201 aa). Ser935 is modified (phosphoserine). The tract at residues 936–951 is calmodulin-binding; that stretch reads PQQVDFRSVLAKKGTP. The 1-5; truncated repeat unit spans residues 967-985; sequence DFRSVLGGKKKSPSENGGN. 5 consecutive repeat copies span residues 990–1002, 1003–1014, 1015–1026, 1027–1038, and 1039–1049. The tract at residues 990-1049 is 5 X 12 AA approximate tandem repeats; sequence LNVKAGESPTPAGDAQAIGALKPVGNAKPAETPKPIGNAKPTETLKPVGNTKPAETLKPI. The actin-binding (calcium/calmodulin-insensitive) stretch occupies residues 1048–1482; the sequence is PIANAQPSGS…TVTVNTEQKV (435 aa). The segment covering 1052 to 1065 has biased composition (polar residues); the sequence is AQPSGSLKPVTNAQ. Basic and acidic residues predominate over residues 1085–1099; it reads AGKEEVKEVKNDVNC. Residues 1120–1208 enclose the Ig-like C2-type 7 domain; it reads PVFKEKLQDV…GQAECSCQVT (89 aa). Cys1141 and Cys1192 are oxidised to a cystine. Residues 1212–1257 form a disordered region; sequence AQTSENTKAPEMKSRRPKSSLPPVLGTESDATVKKKPAPKTPTKAA. Residues 1260–1348 form the Ig-like C2-type 8 domain; it reads PQIIQFPEDQ…GSRQAQVNLT (89 aa). The 94-residue stretch at 1356–1449 folds into the Fibronectin type-III domain; it reads PAGTPCASDI…ESELTAVGEK (94 aa). The segment at 1435–1469 is disordered; the sequence is SEPSQESELTAVGEKPEEPKDEVEVSDDDEKEPEV. Positions 1453-1467 are enriched in acidic residues; sequence PKDEVEVSDDDEKEP. Phosphoserine is present on Ser1460. Phosphotyrosine; by ABL1 is present on Tyr1471. Positions 1486-1741 constitute a Protein kinase domain; sequence YDIEERLGSG…CTQCLQHPWL (256 aa). ATP contacts are provided by residues 1492–1500 and Lys1515; that span reads LGSGKFGQV. Phosphotyrosine; by ABL1 is present on Tyr1597. Asp1607 serves as the catalytic Proton acceptor. At Tyr1657 the chain carries Phosphotyrosine; by ABL1. The segment at 1733–1796 is calmodulin-binding; that stretch reads TQCLQHPWLM…SGLSGRKSST (64 aa). 5 positions are modified to phosphoserine: Ser1781, Ser1782, Ser1794, Ser1795, and Ser1798. The interval 1789–1809 is disordered; that stretch reads LSGRKSSTGSPTSPINAEKLE. A compositionally biased stretch (polar residues) spans 1792–1803; the sequence is RKSSTGSPTSPI. Thr1800 carries the post-translational modification Phosphothreonine. Ser1801 is subject to Phosphoserine. Positions 1831-1920 constitute an Ig-like C2-type 9 domain; it reads PYFSKTIRDL…GEATCTAELI (90 aa). Cys1852 and Cys1904 are disulfide-bonded.

It belongs to the protein kinase superfamily. CAMK Ser/Thr protein kinase family. As to quaternary structure, all isoforms including Telokin bind calmodulin. Interacts with CTTN; this interaction is reduced during thrombin-induced endothelial cell (EC) contraction but is promoted by the barrier-protective agonist sphingosine 1-phosphate (S1P) within lamellipodia. A complex made of ABL1, CTTN and MYLK regulates cortical actin-based cytoskeletal rearrangement critical to sphingosine 1-phosphate (S1P)-mediated endothelial cell (EC) barrier enhancement. Binds to NAA10/ARD1. Interacts with SVIL and PTK2B/PYK2. Requires Mg(2+) as cofactor. The cofactor is Ca(2+). Can probably be down-regulated by phosphorylation. Tyrosine phosphorylation by ABL1 increases kinase activity, reverses MLCK-mediated inhibition of Arp2/3-mediated actin polymerization, and enhances CTTN-binding. Phosphorylation by SRC at Tyr-452 promotes CTTN binding. In terms of processing, the C-terminus is deglutamylated by AGTPBP1/CCP1, AGBL1/CCP4 and AGBL4/CCP6, leading to the formation of Myosin light chain kinase, smooth muscle, deglutamylated form. The consequences of C-terminal deglutamylation are unknown. In terms of tissue distribution, smooth muscle isoform is expressed in all tissues with highest levels in bladder, uterus, vas deferens, colon, ileum, and tracheae. Isoform 1 is expressed in lung, bladder, and vas deferens. Telokin is expressed in smooth muscle cells of the gut, reproductive tract and urinary tract, including in uterus, vas deferens, bladder, colon, kidney, ureter and ovary. Telokin is also detected in the trachea.

The protein resides in the cytoplasm. It localises to the cell projection. The protein localises to the lamellipodium. Its subcellular location is the cleavage furrow. It is found in the cytoskeleton. The protein resides in the stress fiber. The catalysed reaction is L-seryl-[myosin light chain] + ATP = O-phospho-L-seryl-[myosin light chain] + ADP + H(+). The enzyme catalyses L-threonyl-[myosin light chain] + ATP = O-phospho-L-threonyl-[myosin light chain] + ADP + H(+). Calcium/calmodulin-dependent myosin light chain kinase implicated in smooth muscle contraction via phosphorylation of myosin light chains (MLC). Also regulates actin-myosin interaction through a non-kinase activity. Phosphorylates PTK2B/PYK2 and myosin light-chains. Involved in the inflammatory response (e.g. apoptosis, vascular permeability, leukocyte diapedesis), cell motility and morphology, airway hyperreactivity and other activities relevant to asthma. Required for tonic airway smooth muscle contraction that is necessary for physiological and asthmatic airway resistance. Necessary for gastrointestinal motility. Implicated in the regulation of endothelial as well as vascular permeability, probably via the regulation of cytoskeletal rearrangements. In the nervous system it has been shown to control the growth initiation of astrocytic processes in culture and to participate in transmitter release at synapses formed between cultured sympathetic ganglion cells. Critical participant in signaling sequences that result in fibroblast apoptosis. Plays a role in the regulation of epithelial cell survival. Required for epithelial wound healing, especially during actomyosin ring contraction during purse-string wound closure. Mediates RhoA-dependent membrane blebbing. Triggers TRPC5 channel activity in a calcium-dependent signaling, by inducing its subcellular localization at the plasma membrane. Promotes cell migration (including tumor cells) and tumor metastasis. PTK2B/PYK2 activation by phosphorylation mediates ITGB2 activation and is thus essential to trigger neutrophil transmigration during acute lung injury (ALI). May regulate optic nerve head astrocyte migration. Probably involved in mitotic cytoskeletal regulation. Regulates tight junction probably by modulating ZO-1 exchange in the perijunctional actomyosin ring. Mediates burn-induced microvascular barrier injury; triggers endothelial contraction in the development of microvascular hyperpermeability by phosphorylating MLC. Essential for intestinal barrier dysfunction. Mediates Giardia spp.-mediated reduced epithelial barrier function during giardiasis intestinal infection via reorganization of cytoskeletal F-actin and tight junctional ZO-1. Necessary for hypotonicity-induced Ca(2+) entry and subsequent activation of volume-sensitive organic osmolyte/anion channels (VSOAC) in cervical cancer cells. The polypeptide is Myosin light chain kinase, smooth muscle (Mus musculus (Mouse)).